Reading from the N-terminus, the 460-residue chain is Cysteine--tRNA ligase (460 aa).

Cysteine 28 contributes to the Zn(2+) binding site. The 'HIGH' region motif lies at 30–40; it reads VTIYDLCHIGH. Zn(2+)-binding residues include cysteine 209, histidine 234, and glutamate 238. The 'KMSKS' region signature appears at 266-270; the sequence is KMSKS. Lysine 269 contributes to the ATP binding site.

It belongs to the class-I aminoacyl-tRNA synthetase family. Monomer. Zn(2+) is required as a cofactor.

It is found in the cytoplasm. The catalysed reaction is tRNA(Cys) + L-cysteine + ATP = L-cysteinyl-tRNA(Cys) + AMP + diphosphate. The sequence is that of Cysteine--tRNA ligase from Vibrio vulnificus (strain CMCP6).